The chain runs to 327 residues: UDP-glucose 4-epimerase (327 aa).

Thr-119 lines the substrate pocket. The active-site Proton acceptor is the Tyr-143.

The protein belongs to the NAD(P)-dependent epimerase/dehydratase family. Requires NAD(+) as cofactor.

The enzyme catalyses UDP-alpha-D-glucose = UDP-alpha-D-galactose. It functions in the pathway carbohydrate metabolism; galactose metabolism. Its pathway is glycan metabolism; exopolysaccharide biosynthesis. The sequence is that of UDP-glucose 4-epimerase (exoB) from Rhizobium leguminosarum bv. trifolii.